Reading from the N-terminus, the 488-residue chain is Glutamyl-tRNA(Gln) amidotransferase subunit A (488 aa).

Residues Lys-77 and Ser-152 each act as charge relay system in the active site. Ser-176 acts as the Acyl-ester intermediate in catalysis.

Belongs to the amidase family. GatA subfamily. As to quaternary structure, heterotrimer of A, B and C subunits.

It catalyses the reaction L-glutamyl-tRNA(Gln) + L-glutamine + ATP + H2O = L-glutaminyl-tRNA(Gln) + L-glutamate + ADP + phosphate + H(+). Allows the formation of correctly charged Gln-tRNA(Gln) through the transamidation of misacylated Glu-tRNA(Gln) in organisms which lack glutaminyl-tRNA synthetase. The reaction takes place in the presence of glutamine and ATP through an activated gamma-phospho-Glu-tRNA(Gln). This Streptococcus agalactiae serotype III (strain NEM316) protein is Glutamyl-tRNA(Gln) amidotransferase subunit A.